A 305-amino-acid polypeptide reads, in one-letter code: N-acetylmuramic acid 6-phosphate etherase (305 aa).

An SIS domain is found at 61-224 (ISDALAKGGR…STGAMVKLGK (164 aa)). Glu89 serves as the catalytic Proton donor. The active site involves Glu120.

It belongs to the GCKR-like family. MurNAc-6-P etherase subfamily. As to quaternary structure, homodimer.

The enzyme catalyses N-acetyl-D-muramate 6-phosphate + H2O = N-acetyl-D-glucosamine 6-phosphate + (R)-lactate. Its pathway is amino-sugar metabolism; N-acetylmuramate degradation. Functionally, specifically catalyzes the cleavage of the D-lactyl ether substituent of MurNAc 6-phosphate, producing GlcNAc 6-phosphate and D-lactate. This Synechocystis sp. (strain ATCC 27184 / PCC 6803 / Kazusa) protein is N-acetylmuramic acid 6-phosphate etherase.